Reading from the N-terminus, the 265-residue chain is Cell division protein DivIB (265 aa).

Residues 1-33 are Cytoplasmic-facing; sequence MRMELKMMGNVNKSNKTNEYILRRHKKKRKKKL. A helical transmembrane segment spans residues 34–54; sequence IIFSILLISILVTLCFKHPFF. Residues 54-122 enclose the POTRA domain; sequence FNVKIVEVKD…NKIVIHIKER (69 aa). The Extracellular segment spans residues 55–265; that stretch reads NVKIVEVKDN…FKGNPVVFIK (211 aa).

It belongs to the FtsQ/DivIB family. DivIB subfamily.

Its subcellular location is the cell membrane. In terms of biological role, cell division protein that may be involved in stabilizing or promoting the assembly of the division complex. The sequence is that of Cell division protein DivIB from Clostridium tetani (strain Massachusetts / E88).